A 263-amino-acid chain; its full sequence is uncharacterized protein (263 aa).

An N-terminal signal peptide occupies residues 1 to 22 (MEYLKRLALLISVIILTIFIMG). The N-palmitoyl cysteine moiety is linked to residue C23. Residue C23 is the site of S-diacylglycerol cysteine attachment.

Belongs to the staphylococcal tandem lipoprotein family.

The protein resides in the cell membrane. This is an uncharacterized protein from Staphylococcus aureus (strain USA300).